A 212-amino-acid chain; its full sequence is MKKINVAPENPQYRIVEIFESLQGEGWNTGMPAVFVRLGKCNLACGWCDTDYLTFGMMGLSDILGRLKTYAARNIIITGGEPTIQPHLDMLLDTLKAEGYFLCLETNGLNPAPPQIDYVATSPKACYAAKYENSCIETADEVRIVADGDVLAFCENMERKIRAHHYYLSPCEQDGAMNIYDTIRQIGILNSRPDASVHWQLSVQTHKWAGIE.

Residues 22–24 (LQG) and Arg37 contribute to the substrate site. Residues 28–212 (NTGMPAVFVR…VQTHKWAGIE (185 aa)) enclose the Radical SAM core domain. [4Fe-4S] cluster contacts are provided by Cys41, Cys45, and Cys48. Thr50 contributes to the Mg(2+) binding site. Residue Thr78 participates in substrate binding. S-adenosyl-L-methionine contacts are provided by residues Gly80 and 122-124 (SPK).

Belongs to the radical SAM superfamily. 7-carboxy-7-deazaguanine synthase family. In terms of assembly, homodimer. [4Fe-4S] cluster serves as cofactor. S-adenosyl-L-methionine is required as a cofactor. It depends on Mg(2+) as a cofactor.

The enzyme catalyses 6-carboxy-5,6,7,8-tetrahydropterin + H(+) = 7-carboxy-7-deazaguanine + NH4(+). Its pathway is purine metabolism; 7-cyano-7-deazaguanine biosynthesis. In terms of biological role, catalyzes the complex heterocyclic radical-mediated conversion of 6-carboxy-5,6,7,8-tetrahydropterin (CPH4) to 7-carboxy-7-deazaguanine (CDG), a step common to the biosynthetic pathways of all 7-deazapurine-containing compounds. The sequence is that of 7-carboxy-7-deazaguanine synthase from Neisseria meningitidis serogroup B (strain ATCC BAA-335 / MC58).